A 186-amino-acid polypeptide reads, in one-letter code: Ribosome-recycling factor (186 aa).

Belongs to the RRF family.

It is found in the cytoplasm. In terms of biological role, responsible for the release of ribosomes from messenger RNA at the termination of protein biosynthesis. May increase the efficiency of translation by recycling ribosomes from one round of translation to another. The polypeptide is Ribosome-recycling factor (Rickettsia bellii (strain OSU 85-389)).